We begin with the raw amino-acid sequence, 308 residues long: N-acetylmuramic acid 6-phosphate etherase (308 aa).

The 164-residue stretch at 63 to 226 (IVDAFACGGR…STASMIRSGK (164 aa)) folds into the SIS domain. Glu91 acts as the Proton donor in catalysis. Residue Glu122 is part of the active site.

The protein belongs to the GCKR-like family. MurNAc-6-P etherase subfamily. Homodimer.

The enzyme catalyses N-acetyl-D-muramate 6-phosphate + H2O = N-acetyl-D-glucosamine 6-phosphate + (R)-lactate. The protein operates within amino-sugar metabolism; 1,6-anhydro-N-acetylmuramate degradation. It functions in the pathway amino-sugar metabolism; N-acetylmuramate degradation. It participates in cell wall biogenesis; peptidoglycan recycling. Its function is as follows. Specifically catalyzes the cleavage of the D-lactyl ether substituent of MurNAc 6-phosphate, producing GlcNAc 6-phosphate and D-lactate. Together with AnmK, is also required for the utilization of anhydro-N-acetylmuramic acid (anhMurNAc) either imported from the medium or derived from its own cell wall murein, and thus plays a role in cell wall recycling. This is N-acetylmuramic acid 6-phosphate etherase from Colwellia psychrerythraea (strain 34H / ATCC BAA-681) (Vibrio psychroerythus).